We begin with the raw amino-acid sequence, 465 residues long: MAHTEQYRFPKDFWWGSSASATQMEGAADRDGKGQNIWDYWFEKEPHRFFDHVGPADTSQFYDNYKEDIRLMKELGHNSFRMSISWSRLIPNGTGEINDKAADFYNNVIDELIANGIEPFVNLFHFDMPMALQKIGGWVNRETVDAYENYARTCFRLFGGRVKKWFTHNEPIVPVEGGYLYDFHYPNKVDFKEAVQVGFHTMLSSARAIQAYREMKQDGKIGIILNLTPSYPRSSHPADVKAGEIADAFFNRSFLDPSVKGEFPKELVDILKHEGFMPDYNAEDLDIIKKNTVDLLGVNYYQPRRVKAKEHLPNPDAPFLPDRYFDPYVMPGRKMNPHRGWEIYEKGVYDILINLKENYGNIECFISENGMGVEGEERFRDEQGIIQDDYRIEFIKEHLKWIHRAIQEGSNVKGYHLWTFMDNWSWTNAYKNRYGFVSVNLEKDGERTVKKSGKWFKEVAEHSGF.

Residue E170 is the Proton donor of the active site. E368 functions as the Nucleophile in the catalytic mechanism.

The protein belongs to the glycosyl hydrolase 1 family.

It carries out the reaction 6-phospho-beta-D-glucosyl-(1-&gt;4)-D-glucose + H2O = D-glucose 6-phosphate + D-glucose. In terms of biological role, phospho-beta-D-glucosidase that seems to be involved in the degradation of glucomannan. Is also capable of hydrolyzing aryl-phospho-beta-D-glucosides, although very weakly, and plays only a minor role, if any, in the degradation of these substrates in vivo. In Bacillus subtilis (strain 168), this protein is 6-phospho-beta-glucosidase GmuD (gmuD).